The chain runs to 477 residues: Cytoplasmic 60S subunit biogenesis factor ZNF622 (477 aa).

A2 is modified (N-acetylalanine). 2 U1-type zinc fingers span residues 4 to 28 (YTCI…TDWH) and 67 to 91 (TYCT…SRRH). Residues 135–212 (AIKAQPSMSP…EDLDGDDWED (78 aa)) form a disordered region. Over residues 167-178 (GTHDRDPSEKPP) the composition is skewed to basic and acidic residues. Over residues 196 to 212 (EDSEEEEEDLDGDDWED) the composition is skewed to acidic residues. Residue S276 is modified to Phosphoserine.

It belongs to the REI1 family. As to quaternary structure, homo- and heterodimer. Associates with pre-60S ribosomal particles. Interacts with MELK and MYBL2. Interacts with DNAJC21. Post-translationally, phosphorylated by MELK. The phosphorylation may redirect the protein to the nucleus. Ubiquitinated by HECTD1, leading to its degradation. In terms of tissue distribution, expressed in lung, kidney, spleen, liver and brain with lowest expression in kidney.

It localises to the cytoplasm. Its subcellular location is the nucleus. Functionally, pre-60S-associated cytoplasmic factor involved in the cytoplasmic maturation of the 60S subunit. The chain is Cytoplasmic 60S subunit biogenesis factor ZNF622 from Homo sapiens (Human).